Reading from the N-terminus, the 181-residue chain is ATP-dependent protease subunit HslV (181 aa).

T6 is an active-site residue. Na(+) contacts are provided by A162, C165, and T168.

It belongs to the peptidase T1B family. HslV subfamily. A double ring-shaped homohexamer of HslV is capped on each side by a ring-shaped HslU homohexamer. The assembly of the HslU/HslV complex is dependent on binding of ATP.

The protein resides in the cytoplasm. It carries out the reaction ATP-dependent cleavage of peptide bonds with broad specificity.. With respect to regulation, allosterically activated by HslU binding. Its function is as follows. Protease subunit of a proteasome-like degradation complex believed to be a general protein degrading machinery. The sequence is that of ATP-dependent protease subunit HslV from Solidesulfovibrio magneticus (strain ATCC 700980 / DSM 13731 / RS-1) (Desulfovibrio magneticus).